The chain runs to 711 residues: Zinc finger CCCH domain-containing protein 32 (711 aa).

Residues 1-21 show a composition bias toward low complexity; sequence MEADGAAAAAAAGEASTEAGA. A disordered region spans residues 1 to 23; the sequence is MEADGAAAAAAAGEASTEAGARP. 3 consecutive C3H1-type zinc fingers follow at residues 31–60, 62–88, and 112–139; these read LRRN…HSDN, RMNP…HPPI, and GKQL…HGPQ. 4 disordered regions span residues 221–246, 339–376, 405–561, and 573–701; these read KSEK…GDHP, RFNG…HSER, SSLA…EGPK, and AAWA…DDDD. 2 stretches are compositionally biased toward basic and acidic residues: residues 364–376 and 413–427; these read SERS…HSER and RNGE…YRER. Residues 428–437 show a composition bias toward basic residues; the sequence is AHGHRSHRDH. Basic and acidic residues-rich tracts occupy residues 460–509 and 585–594; these read SPDR…RRSS and KQDKSAEVSH. Acidic residues-rich tracts occupy residues 648 to 663 and 686 to 701; these read EDII…DADN and ENAY…DDDD.

This is Zinc finger CCCH domain-containing protein 32 from Oryza sativa subsp. japonica (Rice).